The primary structure comprises 443 residues: D-inositol 3-phosphate glycosyltransferase (443 aa).

His-26 contacts 1D-myo-inositol 3-phosphate. Residues 32-33 (QP) and Gly-40 contribute to the UDP-N-acetyl-alpha-D-glucosamine site. 1D-myo-inositol 3-phosphate is bound by residues 37-42 (DAGGMN), Lys-95, Tyr-128, Thr-152, and Arg-172. 3 residues coordinate UDP-N-acetyl-alpha-D-glucosamine: Arg-246, Lys-251, and Gln-304. The Mg(2+) site is built by Tyr-313, Arg-314, and Ala-316. Positions 326 and 334 each coordinate UDP-N-acetyl-alpha-D-glucosamine. Thr-340 is a binding site for Mg(2+).

It belongs to the glycosyltransferase group 1 family. MshA subfamily. In terms of assembly, homodimer.

It catalyses the reaction 1D-myo-inositol 3-phosphate + UDP-N-acetyl-alpha-D-glucosamine = 1D-myo-inositol 2-acetamido-2-deoxy-alpha-D-glucopyranoside 3-phosphate + UDP + H(+). Functionally, catalyzes the transfer of a N-acetyl-glucosamine moiety to 1D-myo-inositol 3-phosphate to produce 1D-myo-inositol 2-acetamido-2-deoxy-glucopyranoside 3-phosphate in the mycothiol biosynthesis pathway. The protein is D-inositol 3-phosphate glycosyltransferase of Mycobacteroides abscessus (strain ATCC 19977 / DSM 44196 / CCUG 20993 / CIP 104536 / JCM 13569 / NCTC 13031 / TMC 1543 / L948) (Mycobacterium abscessus).